The primary structure comprises 219 residues: RNA-free ribonuclease P (219 aa).

It belongs to the HARP family.

It catalyses the reaction Endonucleolytic cleavage of RNA, removing 5'-extranucleotides from tRNA precursor.. RNA-free RNase P that catalyzes the removal of the 5'-leader sequence from pre-tRNA to produce the mature 5'-terminus. This chain is RNA-free ribonuclease P, found in Staphylothermus marinus (strain ATCC 43588 / DSM 3639 / JCM 9404 / F1).